The primary structure comprises 1098 residues: Unconventional myosin-If (1098 aa).

Positions 17–690 (SGVDDMVLLP…SLFLLEEVRE (674 aa)) constitute a Myosin motor domain. 110-117 (GESGAGKT) serves as a coordination point for ATP. Positions 579 to 589 (PHYIRCIKPNE) are actin-binding. The 30-residue stretch at 693–722 (FDGFARTIQKAWRRHVAVRKYEEMREEASN) folds into the IQ domain. The TH1 domain occupies 728 to 917 (KERRRNSINR…GRTLTVSVGD (190 aa)). 2 disordered regions span residues 913–1009 (VSVG…EFLN) and 1021–1044 (KRSVGQRPVPGVGRPKPQPRTHGP). The span at 924 to 937 (KPTRKGMAKGKPRR) shows a compositional bias: basic residues. At Ser1023 the chain carries Phosphoserine. The SH3 domain occupies 1041 to 1098 (THGPRCRALYQYVGQDVDELSFNVNEVIEILMEDPSGWWKGRLHGQEGLFPGNYVEKI).

Belongs to the TRAFAC class myosin-kinesin ATPase superfamily. Myosin family.

Myosins are actin-based motor molecules with ATPase activity. Unconventional myosins serve in intracellular movements. Their highly divergent tails are presumed to bind to membranous compartments, which would be moved relative to actin filaments. The sequence is that of Unconventional myosin-If (MYO1F) from Homo sapiens (Human).